A 1062-amino-acid polypeptide reads, in one-letter code: Valine--tRNA ligase, mitochondrial (1062 aa).

Residues 1-15 constitute a mitochondrion transit peptide; that stretch reads MPHLPLASFRPPLRG. Residues 1 to 73 form a disordered region; it reads MPHLPLASFR…AKGKPPAEST (73 aa). Over residues 42–56 the composition is skewed to basic and acidic residues; the sequence is RNREAKQKRLREKQA. Positions 146-156 match the 'HIGH' region motif; that stretch reads PNVTGSLHIGH. The 'KMSKS' region motif lies at 659-663; the sequence is KMSKS. Lys662 contributes to the ATP binding site.

The protein belongs to the class-I aminoacyl-tRNA synthetase family.

It is found in the mitochondrion. The enzyme catalyses tRNA(Val) + L-valine + ATP = L-valyl-tRNA(Val) + AMP + diphosphate. Catalyzes the attachment of valine to tRNA(Val) in a two-step reaction: valine is first activated by ATP to form Val-AMP and then transferred to the acceptor end of tRNA(Val). The protein is Valine--tRNA ligase, mitochondrial (VARS2) of Sus scrofa (Pig).